We begin with the raw amino-acid sequence, 167 residues long: Putative C-type lectin protein FPV008/FPV253 (167 aa).

One can recognise a C-type lectin domain in the interval 49–152 (CPDEWIGYNS…SCIFHERTIC (104 aa)). Disulfide bonds link Cys-77–Cys-152 and Cys-131–Cys-144.

The chain is Putative C-type lectin protein FPV008/FPV253 from Vertebrata (FPV).